Consider the following 175-residue polypeptide: Adenine phosphoribosyltransferase (175 aa).

This sequence belongs to the purine/pyrimidine phosphoribosyltransferase family. In terms of assembly, homodimer.

Its subcellular location is the cytoplasm. The catalysed reaction is AMP + diphosphate = 5-phospho-alpha-D-ribose 1-diphosphate + adenine. Its pathway is purine metabolism; AMP biosynthesis via salvage pathway; AMP from adenine: step 1/1. Its function is as follows. Catalyzes a salvage reaction resulting in the formation of AMP, that is energically less costly than de novo synthesis. This chain is Adenine phosphoribosyltransferase, found in Thermosipho melanesiensis (strain DSM 12029 / CIP 104789 / BI429).